The sequence spans 419 residues: MGTETEYLQSIQQALKSLTTAANNCQLTYTHAVGQDVHSLCAREAVRKTLVLEAYKFLQIAQGPVDAAVTCFEQTAHLASVRALLEAGVFEVLPTDGTPRTMKEVAEKLDVDESLLARLMRHASLYGPLEETGPGSYRHTPFSLVYLRPEIRGMVRFAMDEHMPAHLKLHEYLQQTSWTAPSSSTNNPYTHAHSITGTSMFANLSAPSNKHRLDAFNDAMTVQATTAIWMIDLFPFHEVLSPSASADTVLAVDIGGGTGRAISRIRSLAGNLPGRYILQDQAHVISNLPSPSPSSYLDGIETMTHDFFTPQPVAGAQIYLIRRCLHNWPEESVIRILRNIVPAMARTNSRLLIEEIIVPESNSGIEEGWMDMIMMALGAKQRTLEEWKGVLGTAGLEVVTVYRVDGICHGLIEARVKSE.

S-adenosyl-L-methionine-binding positions include 255–256 (GG), aspartate 280, 306–307 (DF), and arginine 323. The active-site Proton acceptor is histidine 326.

This sequence belongs to the class I-like SAM-binding methyltransferase superfamily. Cation-independent O-methyltransferase family. Requires S-adenosyl-L-methionine as cofactor.

It participates in secondary metabolite biosynthesis. In terms of biological role, non-reducing polyketide synthase; part of the gene cluster that mediates the biosynthesis of the bicoumarin desertorin. The non-reducing polyketide synthase desS first catalyzes the formation of the pentaketidic 4,7-dihydroxy-5-methylcoumarin from acetyl coenzyme A and 4 malonyl coenzyme A molecules. Further O-methylation by desB leads to the formation of 7-demethylsiderin. Then, an oxidative phenol coupling catalyzed by the cytochrome P450 monooxygenase desC forms the 6,8'-dimer M-desertorin A via dimerization the monomeric precursor, 7-demethylsiderin. M-desertorin A is further converted to M-desertorin C. In Aspergillus desertorum (Emericella desertorum), this protein is O-methyltransferase desB.